The following is a 644-amino-acid chain: Exoribonuclease 2 (644 aa).

Positions 189–516 (REDLTALNFV…NHRLLKAVIT (328 aa)) constitute an RNB domain. Positions 561-643 (DIRFNAEIID…ETRGIVAKPA (83 aa)) constitute an S1 motif domain.

The protein belongs to the RNR ribonuclease family. RNase II subfamily.

The protein resides in the cytoplasm. It carries out the reaction Exonucleolytic cleavage in the 3'- to 5'-direction to yield nucleoside 5'-phosphates.. Involved in mRNA degradation. Hydrolyzes single-stranded polyribonucleotides processively in the 3' to 5' direction. In Pectobacterium atrosepticum (strain SCRI 1043 / ATCC BAA-672) (Erwinia carotovora subsp. atroseptica), this protein is Exoribonuclease 2.